The chain runs to 357 residues: MADKGSGGSRLPLALPPASQGCSSGGSGSSAGGSGNPRPPRNLQGLLQMAITAGSQEPDPPPEPMSEERRQWLQEAMSAAFRGQREEVEQMKNCLRVLSQATPAMAGEAELATDQQEREGALELLADLCENMDNAADFCQLSGMHLLVGRYLEAGAAGLRWRAAQLIGTCSQNVAAIQEQVLGLGALRKLLRLLDRDSCDTVRVKALFAISCLVREQEAGLLQFLRLDGFSVLMRAMQQQVQKLKVKSAFLLQNLLVGHPEHKGTLCSMGMVQQLVALVRTEHSPFHEHVLGALCSLVTDFPQGVRECREPELGLEELLRHRCQLLQQREEYQEELEFCEKLLQTCFSSPTDDSMDR.

The segment at 1 to 68 (MADKGSGGSR…DPPPEPMSEE (68 aa)) is disordered. The segment covering 23-35 (SSGGSGSSAGGSG) has biased composition (gly residues). ARM repeat units follow at residues 130-172 (ENMD…TCSQ), 175-215 (AAIQ…CLVR), 218-257 (EAGLLQFLRLDGFSVLMRAMQQQVQKLKVKSAFLLQNLLV), and 260-299 (PEHKGTLCSMGMVQQLVALVRTEHSPFHEHVLGALCSLVT). Residues Ser-349 and Ser-354 each carry the phosphoserine modification.

As to quaternary structure, interacts with the ATP-binding domain of HSPA1A. Detected in a ternary complex containing STUB1, HSPA1A and HSPBP1. Interacts with PGLYRP1; this interaction blocks the cytotoxic activity of the PGLYRP1-HSPA1A complex.

Inhibits HSPA1A chaperone activity by changing the conformation of the ATP-binding domain of HSPA1A and interfering with ATP binding. Interferes with ubiquitination mediated by STUB1 and inhibits chaperone-assisted degradation of target proteins. This Mus musculus (Mouse) protein is Hsp70-binding protein 1 (Hspbp1).